The following is a 113-amino-acid chain: UPF0102 protein Dgeo_1894 (113 aa).

It belongs to the UPF0102 family.

The chain is UPF0102 protein Dgeo_1894 from Deinococcus geothermalis (strain DSM 11300 / CIP 105573 / AG-3a).